A 189-amino-acid polypeptide reads, in one-letter code: Density-regulated protein homolog (189 aa).

An SUI1 domain is found at Ile105–Trp172.

The protein belongs to the DENR family. In terms of assembly, interacts with MCTS1.

Its function is as follows. Regulates translation as part of a complex with MCTS1. Specifically required for translational re-initiation in mRNAs containing upstream open reading frames (uORFs). Not required for standard translational initiation. Regulates expression of a subset of gene products including mbc, InR and EcR. This is Density-regulated protein homolog from Drosophila melanogaster (Fruit fly).